Here is a 351-residue protein sequence, read N- to C-terminus: Meiotically up-regulated gene 1 protein (351 aa).

The protein localises to the cytoplasm. Required for correct meiotic chromosome segregation. This Schizosaccharomyces pombe (strain 972 / ATCC 24843) (Fission yeast) protein is Meiotically up-regulated gene 1 protein (mug1).